We begin with the raw amino-acid sequence, 296 residues long: Protoheme IX farnesyltransferase (296 aa).

Helical transmembrane passes span 27–47 (IMYL…GTIH), 48–68 (PLIG…AGAL), 98–118 (ALEC…LTVN), 120–140 (VSAI…TMVL), 148–168 (IVIG…SVTG), 175–195 (LLLF…LSLL), 219–239 (HIMG…LYVA), 242–262 (VLYE…AYCL), and 274–294 (CMGL…AIAL).

This sequence belongs to the UbiA prenyltransferase family. Protoheme IX farnesyltransferase subfamily.

It is found in the cell inner membrane. The enzyme catalyses heme b + (2E,6E)-farnesyl diphosphate + H2O = Fe(II)-heme o + diphosphate. It participates in porphyrin-containing compound metabolism; heme O biosynthesis; heme O from protoheme: step 1/1. Converts heme B (protoheme IX) to heme O by substitution of the vinyl group on carbon 2 of heme B porphyrin ring with a hydroxyethyl farnesyl side group. This chain is Protoheme IX farnesyltransferase, found in Anaplasma phagocytophilum (strain HZ).